A 231-amino-acid chain; its full sequence is Cilia- and flagella-associated protein 299 (231 aa).

It is found in the cytoplasm. It localises to the nucleus. May be involved in spermatogenesis. In Bos taurus (Bovine), this protein is Cilia- and flagella-associated protein 299.